A 476-amino-acid chain; its full sequence is tRNA(Ile)-lysidine synthase (476 aa).

ATP is bound at residue serine 26 to serine 31.

It belongs to the tRNA(Ile)-lysidine synthase family.

It is found in the cytoplasm. The enzyme catalyses cytidine(34) in tRNA(Ile2) + L-lysine + ATP = lysidine(34) in tRNA(Ile2) + AMP + diphosphate + H(+). In terms of biological role, ligates lysine onto the cytidine present at position 34 of the AUA codon-specific tRNA(Ile) that contains the anticodon CAU, in an ATP-dependent manner. Cytidine is converted to lysidine, thus changing the amino acid specificity of the tRNA from methionine to isoleucine. The sequence is that of tRNA(Ile)-lysidine synthase from Bartonella quintana (strain Toulouse) (Rochalimaea quintana).